Here is a 499-residue protein sequence, read N- to C-terminus: Protein phosphatase PP2A 55 kDa regulatory subunit (499 aa).

Residues 1-30 (MGRWGRQSPVLEPPDPQMQTTPPPPTLPPR) form a disordered region. Pro residues predominate over residues 11–28 (LEPPDPQMQTTPPPPTLP). 7 WD repeats span residues 79-118 (TDAD…KAAN), 144-185 (EIEE…KSFG), 228-266 (AHTY…QSYN), 277-317 (ELTE…LCDR), 336-374 (EIIS…KPIE), 391-432 (ENDC…DVTL), and 467-498 (DFNK…FQDK).

This sequence belongs to the phosphatase 2A regulatory subunit B family. In terms of assembly, PP2A exists in several trimeric forms, all of which consist of a core composed of a catalytic subunit associated with a 65 kDa regulatory subunit (PR65) (subunit A). The core complex associates with a third, variable subunit (subunit B), which confers distinct properties to the holoenzyme.

In terms of biological role, could perform a substrate recognition function or could be responsible for targeting the enzyme complex to the appropriate subcellular compartment. The polypeptide is Protein phosphatase PP2A 55 kDa regulatory subunit (tws) (Drosophila melanogaster (Fruit fly)).